Reading from the N-terminus, the 461-residue chain is Lysosomal proton-coupled steroid conjugate and bile acid symporter SLC46A3 (461 aa).

Positions 1–25 (MKISFIEPAILLYAFAMTLTIPLTA) are cleaved as a signal peptide. The Extracellular portion of the chain corresponds to 26–70 (QYVYRRIWEETGNYTFTSSSNVSECEQNKSSSTFAFQEEVQKKAS). N-linked (GlcNAc...) asparagine glycans are attached at residues asparagine 38, asparagine 46, and asparagine 53. Residues 71–91 (LFSLQVEISGLIPGLVSTFML) form a helical membrane-spanning segment. The Cytoplasmic segment spans residues 92–103 (LSSSDNHGRKLP). Residues 104-124 (MVLSSLGSLGTNLWLCAMSYF) form a helical membrane-spanning segment. The Extracellular portion of the chain corresponds to 125–135 (DLPLQLLVAST). A helical membrane pass occupies residues 136–156 (FIGALFGNYTTFWGACFAYIV). The Cytoplasmic segment spans residues 157–170 (DQEKEYKHRIIRIA). A helical transmembrane segment spans residues 171–191 (VLDFMLGVVTGLTGLSSGYFI). The Extracellular segment spans residues 192–197 (RELGFA). Residues 198–218 (WSYFIIAVVVLVNLAYILFFL) traverse the membrane as a helical segment. Topologically, residues 219 to 260 (SDPIKESSSQIVTMSCSESLKDLFYRTYMLFKNGSCKRRSLL) are cytoplasmic. A helical membrane pass occupies residues 261–281 (CLLIFTLVVYFFVVFGITPVF). The Extracellular portion of the chain corresponds to 282–301 (TLYELGPPLCWNEVYIGYGS). Residues 302–322 (ALGSLSFLSSFLGIWLFSYCL) traverse the membrane as a helical segment. The Cytoplasmic segment spans residues 323-324 (KD). A helical membrane pass occupies residues 325–345 (IHIAYVGIFTTMVGMMLTAFT). The Extracellular portion of the chain corresponds to 346 to 347 (RT). The chain crosses the membrane as a helical span at residues 348–368 (TLMMFLVRISFFFTIMPLSIL). The Cytoplasmic portion of the chain corresponds to 369-381 (RSMLSKVVHSTEQ). Residues 382-402 (GVLFACIAFLETLGGVTSTSA) traverse the membrane as a helical segment. The Extracellular portion of the chain corresponds to 403–415 (YNGIYSATVAWYP). The helical transmembrane segment at 416–436 (GFVFLLSAGLLVLPAVSLCMV) threads the bilayer. The Cytoplasmic portion of the chain corresponds to 437 to 461 (KCIGWEEGSYTLLIHDEPSEHTSDS). Residues 446–449 (YTLL) carry the Tyrosine-based lysosomal-sorting motif motif.

The protein belongs to the major facilitator superfamily. SLC46A family.

The protein resides in the lysosome membrane. It catalyses the reaction estrone 3-sulfate(out) + n H(+)(out) = estrone 3-sulfate(in) + n H(+)(in). The catalysed reaction is 25-hydroxyvitamin D3 sulfate(out) + n H(+)(out) = 25-hydroxyvitamin D3 sulfate(in) + n H(+)(in). The enzyme catalyses cholate(out) + n H(+)(out) = cholate(in) + n H(+)(in). It carries out the reaction glycocholate(out) + n H(+)(out) = glycocholate(in) + n H(+)(in). It catalyses the reaction taurocholate(out) + n H(+)(out) = taurocholate(in) + n H(+)(in). The catalysed reaction is dehydroepiandrosterone 3-sulfate(out) + n H(+)(out) = dehydroepiandrosterone 3-sulfate(in) + n H(+)(in). The enzyme catalyses N-acetyl-D-muramoyl-L-alanyl-D-isoglutamine(out) + n H(+)(out) = N-acetyl-D-muramoyl-L-alanyl-D-isoglutamine(in) + n H(+)(in). It carries out the reaction 2',3'-cGAMP(out) + n H(+)(out) = 2',3'-cGAMP(in) + n H(+)(in). Functionally, lysosomal proton-coupled steroid conjugate and bile acid transporter. Preferentially recognizes lipophilic steroid conjugates or bile acis as endogenous substrates and seems to mediate escape from lysosomes to the cytoplasm. Modulates hepatic cytosolic copper homeostasis, maybe acting as a lysosomal copper transporter and sequestering copper ions in the lysosome. Delivers pathogen-associated molecular patterns to cytosolic pattern recognition receptors as part of the innate immune response to microbes. Selectively transports bacterial muramyl dipeptide (MDP) into the cytosol for recognition by NOD2, triggering inflammatory responses. Likely acts as a redundant importer of cyclic GMP-AMP dinucleotides (cGAMPs) in monocyte and macrophage cell lineages. The transport mechanism, its electrogenicity and stoichiometry remain to be elucidated. The protein is Lysosomal proton-coupled steroid conjugate and bile acid symporter SLC46A3 (Slc46a3) of Rattus norvegicus (Rat).